The sequence spans 362 residues: Solute carrier family 25 member 3 (362 aa).

A mitochondrion-targeting transit peptide spans 1–49 (MYSSVVHLARANPFNAPHLQLVHDGLAGPRSDPAGPPGPPRRSRNLAAA). Over 50 to 63 (AVEEQYSCDYGSGR) the chain is Mitochondrial intermembrane. Solcar repeat units lie at residues 63–147 (RFFI…FKVL), 160–244 (WRTS…TVEA), and 261–339 (EQLV…VKVY). Residues 64–86 (FFILCGLGGIISCGTTHTALVPL) traverse the membrane as a helical segment. Over 87–121 (DLVKCRMQVDPQKYKSIFNGFSVTLKEDGFRGLAK) the chain is Mitochondrial matrix. N6-acetyllysine is present on K99. Residue K112 is modified to N6-methyllysine. The helical transmembrane segment at 122–141 (GWAPTFIGYSLQGLCKFGFY) threads the bilayer. Topologically, residues 142–161 (EVFKVLYSNMLGEENAYLWR) are mitochondrial intermembrane. The helical transmembrane segment at 162-183 (TSLYLAASASAEFFADIALAPM) threads the bilayer. The Mitochondrial matrix segment spans residues 184–218 (EAAKVRIQTQPGYANTLRDAAPKMYKEEGLKAFYK). The residue at position 196 (Y196) is a Phosphotyrosine. K209 carries the N6-acetyllysine modification. The chain crosses the membrane as a helical span at residues 219 to 238 (GVAPLWMRQIPYTMMKFACF). The Mitochondrial intermembrane segment spans residues 239-261 (ERTVEALYKFVVPKPRSECSKPE). A helical transmembrane segment spans residues 262–284 (QLVVTFVAGYIAGVFCAIVSHPA). The Mitochondrial matrix segment spans residues 285–314 (DSVVSVLNKEKGSSASEVLKRLGFRGVWKG). A helical membrane pass occupies residues 315 to 333 (LFARIIMIGTLTALQWFIY). At 334–362 (DSVKVYFRLPRPPPPEMPESLKKKLGYTQ) the chain is on the mitochondrial intermembrane side.

Belongs to the mitochondrial carrier (TC 2.A.29) family. In terms of assembly, interacts with PPIF; the interaction is impaired by CsA. In terms of tissue distribution, expressed in heart, diaphragm and skeletal muscle (at protein level). Not detected in liver, lung, brain, and kidney (at protein level). As to expression, ubiquitous (at protein level).

The protein resides in the mitochondrion inner membrane. The enzyme catalyses phosphate(in) + H(+)(in) = phosphate(out) + H(+)(out). Its activity is regulated as follows. Up-regulated in the presence of cardiolipin. Functionally, inorganic ion transporter that transports phosphate or copper ions across the mitochondrial inner membrane into the matrix compartment. Mediates proton-coupled symport of phosphate ions necessary for mitochondrial oxidative phosphorylation of ADP to ATP. Transports copper ions probably in the form of anionic copper(I) complexes to maintain mitochondrial matrix copper pool and to supply copper for cytochrome C oxidase complex assembly. May also play a role in regulation of the mitochondrial permeability transition pore (mPTP). In Bos taurus (Bovine), this protein is Solute carrier family 25 member 3.